A 325-amino-acid polypeptide reads, in one-letter code: Glycerol-3-phosphate dehydrogenase [NAD(P)+] (325 aa).

NADPH contacts are provided by serine 14, phenylalanine 15, arginine 35, and lysine 109. Sn-glycerol 3-phosphate is bound by residues lysine 109 and glycine 137. Position 141 (alanine 141) interacts with NADPH. Residues lysine 192, aspartate 247, serine 257, arginine 258, and asparagine 259 each coordinate sn-glycerol 3-phosphate. Lysine 192 (proton acceptor) is an active-site residue. Arginine 258 provides a ligand contact to NADPH. NADPH is bound by residues leucine 282 and glutamate 284.

This sequence belongs to the NAD-dependent glycerol-3-phosphate dehydrogenase family.

It localises to the cytoplasm. It catalyses the reaction sn-glycerol 3-phosphate + NAD(+) = dihydroxyacetone phosphate + NADH + H(+). The catalysed reaction is sn-glycerol 3-phosphate + NADP(+) = dihydroxyacetone phosphate + NADPH + H(+). It functions in the pathway membrane lipid metabolism; glycerophospholipid metabolism. Catalyzes the reduction of the glycolytic intermediate dihydroxyacetone phosphate (DHAP) to sn-glycerol 3-phosphate (G3P), the key precursor for phospholipid synthesis. The polypeptide is Glycerol-3-phosphate dehydrogenase [NAD(P)+] (Rickettsia africae (strain ESF-5)).